The chain runs to 505 residues: GMP synthase [glutamine-hydrolyzing] (505 aa).

The 188-residue stretch at 3 to 190 (KVLVVNFGGQ…LRKIARISDV (188 aa)) folds into the Glutamine amidotransferase type-1 domain. C80 serves as the catalytic Nucleophile. Catalysis depends on residues H164 and E166. In terms of domain architecture, GMPS ATP-PPase spans 191–380 (WRPEDQITRI…LGLPEDVVYR (190 aa)). ATP is bound at residue 218–224 (SGGVDST).

It carries out the reaction XMP + L-glutamine + ATP + H2O = GMP + L-glutamate + AMP + diphosphate + 2 H(+). Its pathway is purine metabolism; GMP biosynthesis; GMP from XMP (L-Gln route): step 1/1. Its function is as follows. Catalyzes the synthesis of GMP from XMP. This is GMP synthase [glutamine-hydrolyzing] from Pyrobaculum aerophilum (strain ATCC 51768 / DSM 7523 / JCM 9630 / CIP 104966 / NBRC 100827 / IM2).